Here is a 476-residue protein sequence, read N- to C-terminus: Glycogen synthase (476 aa).

Lys-15 lines the ADP-alpha-D-glucose pocket.

This sequence belongs to the glycosyltransferase 1 family. Bacterial/plant glycogen synthase subfamily.

The catalysed reaction is [(1-&gt;4)-alpha-D-glucosyl](n) + ADP-alpha-D-glucose = [(1-&gt;4)-alpha-D-glucosyl](n+1) + ADP + H(+). Its pathway is glycan biosynthesis; glycogen biosynthesis. Functionally, synthesizes alpha-1,4-glucan chains using ADP-glucose. The polypeptide is Glycogen synthase (Mycoplasma mobile (strain ATCC 43663 / 163K / NCTC 11711) (Mesomycoplasma mobile)).